The primary structure comprises 1147 residues: Nucleolar protein 8 (1147 aa).

The RRM domain occupies 8-89 (KRLFVGGLGQ…GTLQIQLAKE (82 aa)). K225 is covalently cross-linked (Glycyl lysine isopeptide (Lys-Gly) (interchain with G-Cter in SUMO2)). Residues S300 and S306 each carry the phosphoserine modification. K316 participates in a covalent cross-link: Glycyl lysine isopeptide (Lys-Gly) (interchain with G-Cter in SUMO2). Phosphotyrosine is present on Y362. 2 positions are modified to phosphoserine: S364 and S365. Phosphothreonine is present on T367. The segment at 379 to 401 (KVKNSAESSQPERTVSKKSSFQK) is disordered. The span at 383-400 (SAESSQPERTVSKKSSFQ) shows a compositional bias: polar residues. S416 carries the post-translational modification Phosphoserine. Disordered regions lie at residues 427 to 452 (KFVNPKFPPDSSGSDSEESEEDEEYK), 472 to 511 (AGSHRKFPGKDSETNGPQNDSHCKFDTTSKNPKTSGDLYN), 592 to 659 (MENG…PLKA), 686 to 741 (KALE…EDNQ), 766 to 888 (ANLD…NEDE), 932 to 963 (KHDHAIYERKQEDKEKESKATRKKKKEEAEKL), and 986 to 1017 (SNTDEKEEDVPRTEAGAREGTGKIRNAETLAC). Acidic residues predominate over residues 441–450 (DSEESEEDEE). 2 stretches are compositionally biased toward polar residues: residues 592–610 (MENGSKCVNGSSSKLTSCQ) and 629–650 (TFENQNHKVMSSTSCDKGSTNP). Basic and acidic residues-rich tracts occupy residues 700 to 714 (SLEKSSKVSPREDPQ) and 732 to 741 (AKDKQAEDNQ). S704 carries the post-translational modification Phosphoserine. T777 carries the post-translational modification Phosphothreonine. Residues S783 and S787 each carry the phosphoserine modification. Positions 799-809 (CPEKELMKESV) are enriched in basic and acidic residues. Phosphoserine is present on residues S819, S820, S825, S827, and S872. Residues 857-883 (SDERFRMDSRFLESDSEDEKKELNEDK) are compositionally biased toward basic and acidic residues. Coiled coils occupy residues 868 to 898 (LESDSEDEKKELNEDKVNEDELAAEKKKTLN) and 937 to 963 (IYERKQEDKEKESKATRKKKKEEAEKL). The segment covering 994-1011 (DVPRTEAGAREGTGKIRN) has biased composition (basic and acidic residues). K1038 participates in a covalent cross-link: Glycyl lysine isopeptide (Lys-Gly) (interchain with G-Cter in SUMO2). Residues 1055-1086 (PNDPRFQDSSSEEEDIAEEADHSKPSPGEAVP) are disordered. 4 positions are modified to phosphoserine: S1063, S1064, S1065, and S1080.

As to quaternary structure, interacts with the GTP form of RRAGA, RRAGC and RRAGD. Interacts with NIP7. Interacts with DDX18; the interaction is RNA-dependent. Interacts with DDX47; the interaction is RNA-dependent. Post-translationally, phosphorylated.

It localises to the nucleus. The protein resides in the nucleolus. In terms of biological role, plays an essential role in the survival of diffuse-type gastric cancer cells. Acts as a nucleolar anchoring protein for DDX47. May be involved in regulation of gene expression at the post-transcriptional level or in ribosome biogenesis in cancer cells. The chain is Nucleolar protein 8 from Mus musculus (Mouse).